The chain runs to 598 residues: Aspartate--tRNA(Asp/Asn) ligase (598 aa).

Glu-170 is a binding site for L-aspartate. The aspartate stretch occupies residues 194–197 (QLFK). Arg-216 contacts L-aspartate. ATP contacts are provided by residues 216-218 (RDE) and Gln-225. His-448 provides a ligand contact to L-aspartate. Residue Glu-482 coordinates ATP. An L-aspartate-binding site is contributed by Arg-489. 534-537 (GWDR) lines the ATP pocket. A disordered region spans residues 558-598 (GGGVDPLTDAPAPITPQQRKESGIDAKPREDKPKEDAKSKA). Positions 575–598 (QRKESGIDAKPREDKPKEDAKSKA) are enriched in basic and acidic residues.

This sequence belongs to the class-II aminoacyl-tRNA synthetase family. Type 1 subfamily. In terms of assembly, homodimer.

It localises to the cytoplasm. The catalysed reaction is tRNA(Asx) + L-aspartate + ATP = L-aspartyl-tRNA(Asx) + AMP + diphosphate. Aspartyl-tRNA synthetase with relaxed tRNA specificity since it is able to aspartylate not only its cognate tRNA(Asp) but also tRNA(Asn). Reaction proceeds in two steps: L-aspartate is first activated by ATP to form Asp-AMP and then transferred to the acceptor end of tRNA(Asp/Asn). The polypeptide is Aspartate--tRNA(Asp/Asn) ligase (Mycolicibacterium smegmatis (strain ATCC 700084 / mc(2)155) (Mycobacterium smegmatis)).